A 318-amino-acid polypeptide reads, in one-letter code: UAP56-interacting factor (318 aa).

N-acetylmethionine is present on methionine 1. Residues 1-27 (MNRFSTRLMGATATPPPAPPKARSNEN) form a disordered region. Position 14 is a phosphothreonine (threonine 14). A Phosphoserine modification is found at serine 24. A UAP56-binding motif motif is present at residues 27 to 45 (NLDKIDMSLDDIIKLNRKE). Residues serine 61 and serine 118 each carry the phosphoserine modification. Lysine 140 participates in a covalent cross-link: Glycyl lysine isopeptide (Lys-Gly) (interchain with G-Cter in SUMO1). Polar residues predominate over residues 163-180 (LNRKNNIPNNFTRSGNKL). The tract at residues 163-183 (LNRKNNIPNNFTRSGNKLSHQ) is disordered. Lysine 261 participates in a covalent cross-link: Glycyl lysine isopeptide (Lys-Gly) (interchain with G-Cter in SUMO2).

This sequence belongs to the UIF family. Interacts with DDX39B/UAP56 and NXF1; interaction with DDX39B/UAP56 and NXF1 are mutually exclusive. Interacts with SSRP1; required for its recruitment to mRNAs. Interacts with CHTOP.

It localises to the nucleus. The protein localises to the nucleoplasm. Its subcellular location is the nucleus speckle. Required for mRNA export from the nucleus to the cytoplasm. Acts as an adapter that uses the DDX39B/UAP56-NFX1 pathway to ensure efficient mRNA export and delivering to the nuclear pore. Associates with spliced and unspliced mRNAs simultaneously with ALYREF/THOC4. In Bos taurus (Bovine), this protein is UAP56-interacting factor (FYTTD1).